Consider the following 334-residue polypeptide: Phospholipase A1 2 (334 aa).

An N-terminal signal peptide occupies residues 1 to 23 (MMNLKYLLFFCLVQALHYCYAYG). Positions 24 to 33 (DPSLSNELDR) are excised as a propeptide. A disulfide bridge links cysteine 37 with cysteine 120. The Nucleophile role is filled by serine 170. Aspartate 198 acts as the Charge relay system in catalysis. Intrachain disulfides connect cysteine 209/cysteine 214 and cysteine 252/cysteine 261. Residue histidine 263 is the Charge relay system of the active site. Intrachain disulfides connect cysteine 278/cysteine 302, cysteine 279/cysteine 327, and cysteine 295/cysteine 300.

Belongs to the AB hydrolase superfamily. Lipase family. Not glycosylated. Expressed by the venom gland.

It localises to the secreted. The catalysed reaction is a 1,2-diacyl-sn-glycero-3-phosphocholine + H2O = a 2-acyl-sn-glycero-3-phosphocholine + a fatty acid + H(+). Functionally, catalyzes the hydrolysis of phosphatidylcholine with phospholipase A1 activity (6.3 U/ml). May act as an allergen and induce hemolytic activity. This Vespa affinis (Lesser banded hornet) protein is Phospholipase A1 2.